We begin with the raw amino-acid sequence, 56 residues long: Large ribosomal subunit protein bL32 (56 aa).

The interval 1 to 56 (MAVQQNRKTRSKRGMRRSHDALSAPTLSQDKETGTTHRRHHVAPDGFYRGRKVVDV) is disordered. Residues 7–16 (RKTRSKRGMR) are compositionally biased toward basic residues.

The protein belongs to the bacterial ribosomal protein bL32 family.

The protein is Large ribosomal subunit protein bL32 of Chromohalobacter salexigens (strain ATCC BAA-138 / DSM 3043 / CIP 106854 / NCIMB 13768 / 1H11).